Reading from the N-terminus, the 1304-residue chain is DNA-directed RNA polymerase subunit beta' (1304 aa).

Residues 1-23 form a disordered region; it reads MSEKGRFSAGLSRQAADGNKADA. Residues C241, C315, C322, and C325 each coordinate Zn(2+). Residues 1256-1268 show a composition bias toward acidic residues; the sequence is AAEPEPDEEEEEP. The segment at 1256–1304 is disordered; that stretch reads AAEPEPDEEEEEPAVLPELPPRLILEDDQLIDDSTPAFDELEEDDDEEE. Low complexity predominate over residues 1269-1278; sequence AVLPELPPRL. Over residues 1294–1304 the composition is skewed to acidic residues; it reads DELEEDDDEEE.

Belongs to the RNA polymerase beta' chain family. RpoC2 subfamily. In cyanobacteria the RNAP catalytic core is composed of 2 alpha, 1 beta, 1 beta', 1 gamma and 1 omega subunit. When a sigma factor is associated with the core the holoenzyme is formed, which can initiate transcription. Zn(2+) serves as cofactor.

The enzyme catalyses RNA(n) + a ribonucleoside 5'-triphosphate = RNA(n+1) + diphosphate. In terms of biological role, DNA-dependent RNA polymerase catalyzes the transcription of DNA into RNA using the four ribonucleoside triphosphates as substrates. The chain is DNA-directed RNA polymerase subunit beta' from Synechococcus sp. (strain JA-2-3B'a(2-13)) (Cyanobacteria bacterium Yellowstone B-Prime).